Reading from the N-terminus, the 589-residue chain is Transmembrane 9 superfamily member 5 (589 aa).

Positions 1–24 (MAQFLLTVLQVLLALTFWIGIGSG) are cleaved as a signal peptide. Residues 25–227 (SSNHYNAGDH…SFHPISQKIH (203 aa)) lie on the Lumenal side of the membrane. A helical membrane pass occupies residues 228–248 (FFSFLNSITVVVLLIGLISFL). Topologically, residues 249-291 (FMRHLKNELRSYSIGDEEERKEAGWKLVHSDVFRCPRNISWLC) are cytoplasmic. The chain crosses the membrane as a helical span at residues 292–312 (AILGTGTQLLILIIALFALAF). Residues 313 to 321 (TGFLYPYNR) lie on the Lumenal side of the membrane. The chain crosses the membrane as a helical span at residues 322–342 (GMLLTSLVIMYTLTSIVAGYT). Topologically, residues 343–361 (STSFHSQFEGNKQKRSVRL) are cytoplasmic. The chain crosses the membrane as a helical span at residues 362–382 (AGILYPVPFFIILSVLNTVAI). The Lumenal segment spans residues 383–394 (TYGATAALPFGT). The chain crosses the membrane as a helical span at residues 395-415 (IVIIILIFTLLNIPFLMLGGV). The Cytoplasmic portion of the chain corresponds to 416 to 450 (LGNRFGLLEFQPPSAVKRNPREIPPQNWYRRKLYQ). The helical transmembrane segment at 451–471 (VFLGGFVPFSAVVLEWHQLYA) threads the bilayer. The Lumenal segment spans residues 472–482 (SLWGFKIYTSP). Residues 483–503 (GIMLFTFIVLIFLSSSVGIIL) traverse the membrane as a helical segment. Over 504 to 518 (TYIQLSGEDHEWWWR) the chain is Cytoplasmic. The helical transmembrane segment at 519–539 (SILCGGFTAVFMYGYGVLFYL) threads the bilayer. Over 540–550 (RSDMTGFLQLS) the chain is Lumenal. The helical transmembrane segment at 551-571 (FYLGYTALLCYALFLVLGTIS) threads the bilayer. Topologically, residues 572 to 589 (FLASLMFIRHIYRSVKLE) are cytoplasmic. The short motif at 578 to 583 (FIRHIY) is the Endoplasmic reticulum export signal element. The short motif at 587-589 (KLE) is the Golgi retention signal element.

It belongs to the nonaspanin (TM9SF) (TC 9.A.2) family. Expressed in the root cap and in giant cells.

Its subcellular location is the endosome membrane. The protein localises to the golgi apparatus membrane. The protein is Transmembrane 9 superfamily member 5 of Arabidopsis thaliana (Mouse-ear cress).